The primary structure comprises 494 residues: Flagellin A (494 aa).

Belongs to the bacterial flagellin family. In terms of assembly, heteromer of FlaA and FlaB. FlaB is located proximal to the hook while the remainder of the filament is composed of the predominant FlaA.

It is found in the secreted. The protein resides in the bacterial flagellum. Flagellin is the subunit protein which polymerizes to form the filaments of bacterial flagella. Important for motility and virulence. This is Flagellin A (flaA) from Helicobacter mustelae.